We begin with the raw amino-acid sequence, 104 residues long: uncharacterized protein (104 aa).

Disordered regions lie at residues 1 to 48 (MLRR…NNQP) and 66 to 104 (QENT…RRCS).

This is an uncharacterized protein from Saccharomyces cerevisiae (strain ATCC 204508 / S288c) (Baker's yeast).